The following is a 283-amino-acid chain: ATP synthase gamma chain (283 aa).

This sequence belongs to the ATPase gamma chain family. F-type ATPases have 2 components, CF(1) - the catalytic core - and CF(0) - the membrane proton channel. CF(1) has five subunits: alpha(3), beta(3), gamma(1), delta(1), epsilon(1). CF(0) has three main subunits: a, b and c.

It is found in the cell membrane. Its function is as follows. Produces ATP from ADP in the presence of a proton gradient across the membrane. The gamma chain is believed to be important in regulating ATPase activity and the flow of protons through the CF(0) complex. In Clostridium perfringens (strain ATCC 13124 / DSM 756 / JCM 1290 / NCIMB 6125 / NCTC 8237 / Type A), this protein is ATP synthase gamma chain.